Reading from the N-terminus, the 485-residue chain is Phosphoglucosamine mutase (485 aa).

Ser133 (phosphoserine intermediate) is an active-site residue. Ser133, Asp274, Asp276, and Asp278 together coordinate Mg(2+). Phosphoserine is present on Ser133.

The protein belongs to the phosphohexose mutase family. Mg(2+) serves as cofactor. Activated by phosphorylation.

It carries out the reaction alpha-D-glucosamine 1-phosphate = D-glucosamine 6-phosphate. Catalyzes the conversion of glucosamine-6-phosphate to glucosamine-1-phosphate. The protein is Phosphoglucosamine mutase of Crocosphaera subtropica (strain ATCC 51142 / BH68) (Cyanothece sp. (strain ATCC 51142)).